The following is a 266-amino-acid chain: Undecaprenyl-diphosphatase (266 aa).

The next 8 membrane-spanning stretches (helical) occupy residues 4–24 (WLIA…PVSS), 46–66 (VLIQ…RLWG), 82–102 (IGIL…HDFI), 105–125 (VLYE…FILL), 142–162 (YPLK…VPGV), 182–202 (AAEF…AYDL), 216–236 (LIGI…KTVL), and 244–264 (FAPF…LLYI).

This sequence belongs to the UppP family.

It is found in the cell inner membrane. The catalysed reaction is di-trans,octa-cis-undecaprenyl diphosphate + H2O = di-trans,octa-cis-undecaprenyl phosphate + phosphate + H(+). Functionally, catalyzes the dephosphorylation of undecaprenyl diphosphate (UPP). Confers resistance to bacitracin. This is Undecaprenyl-diphosphatase from Caulobacter vibrioides (strain ATCC 19089 / CIP 103742 / CB 15) (Caulobacter crescentus).